The primary structure comprises 305 residues: tRNA dimethylallyltransferase (305 aa).

Position 8–15 (8–15) interacts with ATP; it reads GPTAVGKT. 10–15 contacts substrate; it reads TAVGKT. Residues 33–36 form an interaction with substrate tRNA region; that stretch reads DSRQ.

The protein belongs to the IPP transferase family. Monomer. Requires Mg(2+) as cofactor.

It carries out the reaction adenosine(37) in tRNA + dimethylallyl diphosphate = N(6)-dimethylallyladenosine(37) in tRNA + diphosphate. In terms of biological role, catalyzes the transfer of a dimethylallyl group onto the adenine at position 37 in tRNAs that read codons beginning with uridine, leading to the formation of N6-(dimethylallyl)adenosine (i(6)A). The polypeptide is tRNA dimethylallyltransferase (Thermotoga petrophila (strain ATCC BAA-488 / DSM 13995 / JCM 10881 / RKU-1)).